Consider the following 1189-residue polypeptide: Nucleolar protein NET1 (1189 aa).

2 positions are modified to phosphoserine: Ser60 and Ser166. Disordered stretches follow at residues 160-260 and 345-1189; these read SKLN…ISSG and TAQD…FKKK. The segment covering 166–180 has biased composition (low complexity); sequence SPQSVQPQQQIPSSS. A compositionally biased stretch (polar residues) spans 200–210; that stretch reads IRSATNGSMRV. A phosphoserine mark is found at Ser231 and Ser252. Positions 244–253 are enriched in pro residues; it reads LPPPTQPQSP. Residues 368-381 show a composition bias toward basic and acidic residues; the sequence is PEPRISEIEKELKE. Residues 391 to 407 are compositionally biased toward low complexity; that stretch reads PAKAAKIPMKKPYLENG. Over residues 432–450 the composition is skewed to polar residues; that stretch reads ASLQRSQSSIADNNGSPVK. Phosphoserine is present on residues Ser437, Ser439, Ser447, and Ser452. Residues 470–486 show a composition bias toward polar residues; the sequence is ASNTSITKSSNGESWGK. Position 497 is a phosphoserine (Ser497). Basic and acidic residues predominate over residues 526–543; sequence NQVREKEDTNDKLLEKEI. Over residues 590–601 the composition is skewed to acidic residues; sequence IEDDGNDNDEVD. A compositionally biased stretch (polar residues) spans 641–657; that stretch reads SRTSGNSKNSKPYTTVL. Over residues 659 to 668 the composition is skewed to basic and acidic residues; sequence KDIDNSKPDP. Thr676 is subject to Phosphothreonine. Residues 682 to 691 show a composition bias toward low complexity; sequence KRAAQLLAGA. The span at 692–702 shows a compositional bias: basic and acidic residues; the sequence is KKNEVPQKSTE. A compositionally biased stretch (acidic residues) spans 710–725; it reads TDDESESGIETDFSSD. Basic and acidic residues predominate over residues 756-777; that stretch reads KDSKIINKEVDEERNDKRDSQK. Positions 778–792 are enriched in polar residues; it reads KSAVSESSVTNSKIS. A compositionally biased stretch (basic and acidic residues) spans 806–815; it reads KQNEATKVET. Residues 822-833 are compositionally biased toward low complexity; the sequence is SSFPVVGGSPSV. At Ser830 the chain carries Phosphoserine. Composition is skewed to basic and acidic residues over residues 884 to 897, 905 to 919, and 945 to 954; these read DLNK…EPEK, ANDK…DSKS, and ANDKLKDLKA. Over residues 969-999 the composition is skewed to low complexity; it reads SNEKNNSSANDDDSSSSGSSTEDESSSSSSS. Polar residues predominate over residues 1023–1039; it reads RSSSKIEAPSPSVNKKI. Thr1042 is subject to Phosphothreonine. Residues 1055–1070 show a composition bias toward low complexity; it reads SSPPSVKSKTTSNPSS. Phosphoserine occurs at positions 1056 and 1059. Residues 1095-1109 show a composition bias toward basic and acidic residues; sequence PDVKEKTSKSNEKSQ. 2 stretches are compositionally biased toward low complexity: residues 1123–1137 and 1158–1169; these read DSDS…SDSS and SFISAKSASAAL.

This sequence to yeast YKR010c. In terms of assembly, component of the RENT complex which is composed of at least NET1, CDC14 and SIR2. Interacts with NSI1. In terms of processing, phosphorylated by CDC5.

It localises to the nucleus. The protein localises to the nucleolus. Its function is as follows. Has a role in chromosome maintenance and is involved in mitotic exit. Inhibits the action of CDC14 by sequestering it in the nucleolus. Also binds to RNA polymerase I and stimulates rRNA synthesis. Influences RDNA chromatin by tethering SIR2 to rDNA in the nucleolus. This is Nucleolar protein NET1 (NET1) from Saccharomyces cerevisiae (strain ATCC 204508 / S288c) (Baker's yeast).